The sequence spans 576 residues: Sulfite reductase [NADPH] hemoprotein beta-component (576 aa).

4 residues coordinate [4Fe-4S] cluster: C435, C441, C480, and C484. C484 serves as a coordination point for siroheme.

This sequence belongs to the nitrite and sulfite reductase 4Fe-4S domain family. Alpha(8)-beta(8). The alpha component is a flavoprotein, the beta component is a hemoprotein. It depends on siroheme as a cofactor. [4Fe-4S] cluster serves as cofactor.

The enzyme catalyses hydrogen sulfide + 3 NADP(+) + 3 H2O = sulfite + 3 NADPH + 4 H(+). The protein operates within sulfur metabolism; hydrogen sulfide biosynthesis; hydrogen sulfide from sulfite (NADPH route): step 1/1. Its function is as follows. Component of the sulfite reductase complex that catalyzes the 6-electron reduction of sulfite to sulfide. This is one of several activities required for the biosynthesis of L-cysteine from sulfate. The polypeptide is Sulfite reductase [NADPH] hemoprotein beta-component (Yersinia pestis bv. Antiqua (strain Antiqua)).